Reading from the N-terminus, the 347-residue chain is HTH-type transcriptional regulator PhcA (347 aa).

Positions 1–61 constitute an HTH lysR-type domain; sequence MVNVDTKLLV…IRVPHGLTPT (61 aa). The H-T-H motif DNA-binding region spans 21–40; that stretch reads ATYVAEKMHMTAPAVSHSLG. The tract at residues 316–347 is disordered; it reads PMHPPMLTDDSGKSGKTGKGDAEKEDESRLSV. Over residues 325-347 the composition is skewed to basic and acidic residues; it reads DSGKSGKTGKGDAEKEDESRLSV.

It belongs to the LysR transcriptional regulatory family.

Regulates the transcription of one or more of the genes involved in virulence. This is HTH-type transcriptional regulator PhcA (phcA) from Ralstonia nicotianae (strain ATCC BAA-1114 / GMI1000) (Ralstonia solanacearum).